A 675-amino-acid chain; its full sequence is Vacuolar protein sorting-associated protein 5 (675 aa).

Disordered stretches follow at residues 1-26, 65-84, and 165-219; these read MDYEDNLEAPVWDELNHEGDKTQSLV, EWKDPGLSVAGNPQLEEHDN, and RAQR…RREN. Over residues 168 to 180 the composition is skewed to basic residues; sequence RNSKRNHSLKAKR. The segment covering 195–204 has biased composition (basic and acidic residues); the sequence is PLKKAEKENE. A PX domain is found at 279-394; the sequence is VAFKVEVKDP…LFLTSDDFSS (116 aa). Arg320, Lys346, and Arg360 together coordinate a 1,2-diacyl-sn-glycero-3-phospho-(1D-myo-inositol-3-phosphate).

Belongs to the sorting nexin family. As to quaternary structure, component of the retromer complex which consists of VPS29, VPS26, VPS35, VPS5 and VPS17. Component of a retromer subcomplex consisting of VPSD5 and VPS17. In terms of processing, phosphorylated on serine residue(s).

The protein localises to the cytoplasm. Its subcellular location is the golgi apparatus membrane. The protein resides in the endosome membrane. Functionally, plays a role in vesicular protein sorting. Required for retention of late Golgi membrane proteins and vacuolar biogenesis. Component of the membrane-associated retromer complex which is essential in endosome-to-Golgi retrograde transport. The VPS5-VPS17 subcomplex may assemble onto the membrane to promote vesicle formation. The sequence is that of Vacuolar protein sorting-associated protein 5 (VPS5) from Saccharomyces cerevisiae (strain ATCC 204508 / S288c) (Baker's yeast).